A 456-amino-acid polypeptide reads, in one-letter code: Phospholipase A1 member A (456 aa).

An N-terminal signal peptide occupies residues 1-25 (MRPGLWETCFWLWGPLLWLSIGSSG). Catalysis depends on Ser-166, which acts as the Nucleophile. The Charge relay system role is filled by Asp-190. An intrachain disulfide couples Cys-245 to Cys-258. The active-site Charge relay system is His-260. Cystine bridges form between Cys-282–Cys-293 and Cys-296–Cys-304. N-linked (GlcNAc...) asparagine glycosylation occurs at Asn-365.

It belongs to the AB hydrolase superfamily. Lipase family.

Its subcellular location is the secreted. The catalysed reaction is a 1,2-diacyl-sn-glycero-3-phospho-L-serine + H2O = a 2-acyl-sn-glycero-3-phospho-L-serine + a fatty acid + H(+). It carries out the reaction 1,2-di-(9Z)-octadecenoyl-sn-glycero-3-phospho-L-serine + H2O = 2-(9Z-octadecenoyl)-sn-glycero-3-phospho-L-serine + (9Z)-octadecenoate + H(+). It catalyses the reaction 1-hexadecanoyl-2-(5Z,8Z,11Z,14Z-eicosatetraenoyl)-sn-glycero-3-phospho-L-serine + H2O = 2-(5Z,8Z,11Z,14Z)-eicosatetraenoyl-sn-glycero-3-phospho-L-serine + hexadecanoate + H(+). The enzyme catalyses a 1-acyl-sn-glycero-3-phospho-L-serine + H2O = sn-glycero-3-phospho-L-serine + a fatty acid + H(+). The catalysed reaction is 1-(9Z-octadecenoyl)-sn-glycero-3-phospho-L-serine + H2O = sn-glycero-3-phospho-L-serine + (9Z)-octadecenoate + H(+). Its function is as follows. Hydrolyzes the ester bond of the acyl group attached at the sn-1 position of phosphatidylserines (phospholipase A1 activity) and 1-acyl-2-lysophosphatidylserines (lysophospholipase activity) in the pathway of phosphatidylserines acyl chain remodeling. Cleaves phosphatidylserines exposed on the outer leaflet of the plasma membrane of apoptotic cells producing 2-acyl-1-lysophosphatidylserines, which in turn enhance mast cell activation and histamine production. Has no activity toward other glycerophospholipids including phosphatidylcholines, phosphatidylethanolamines, phosphatidic acids or phosphatidylinositols, or glycerolipids such as triolein. In Mus musculus (Mouse), this protein is Phospholipase A1 member A.